Consider the following 414-residue polypeptide: Histidine--tRNA ligase (414 aa).

It belongs to the class-II aminoacyl-tRNA synthetase family. Homodimer.

The protein resides in the cytoplasm. The enzyme catalyses tRNA(His) + L-histidine + ATP = L-histidyl-tRNA(His) + AMP + diphosphate + H(+). The polypeptide is Histidine--tRNA ligase (Mycoplasma capricolum subsp. capricolum (strain California kid / ATCC 27343 / NCTC 10154)).